The following is a 492-amino-acid chain: MPTNGLHQVLKIQFGLVNDTDRYLTAESFGFKVNASAPSLKRKQTWVLEPDPGQGTAVLLRSSHLGRYLSAEEDGRVACEAEQPGRDCRFLVLPQPDGRWVLRSEPHGRFFGGTEDQLSCFATAVSPAELWTVHLAIHPQAHLLSVSRRRYVHLCPREDEMAADGDKPWGVDALLTLIFRSRRYCLKSCDSRYLRSDGRLVWEPEPRACYTLEFKAGKLAFKDCDGHYLAPVGPAGTLKAGRNTRPGKDELFDLEESHPQVVLVAANHRYVSVRQGVNVSANQDDELDHETFLMQIDQETKKCTFYSSTGGYWTLVTHGGIHATATQVSANTMFEMEWRGRRVALKASNGRYVCMKKNGQLAAISDFVGKDEEFTLKLINRPILVLRGLDGFVCHHRGSNQLDTNRSVYDVFHLSFSDGAYRIRGRDGGFWYTGSHGSVCSDGERAEDFVFEFRERGRLAIRARSGKYLRGGASGLLRADADAPAGTALWEY.

The protein belongs to the fascin family. As to expression, localized specifically in the outer and inner segments of the photoreceptor cells in the retina.

It localises to the cytoplasm. The protein resides in the cytoskeleton. It is found in the cell projection. Its subcellular location is the stereocilium. Its function is as follows. Acts as an actin bundling protein. May play a pivotal role in photoreceptor cell-specific events, such as disk morphogenesis. This Homo sapiens (Human) protein is Fascin-2 (FSCN2).